An 892-amino-acid chain; its full sequence is Alanine--tRNA ligase (892 aa).

Zn(2+)-binding residues include His565, His569, Cys675, and His679. The interval 852 to 871 (MGGKGGGGRPDMAQAGGPEA) is disordered.

It belongs to the class-II aminoacyl-tRNA synthetase family. Zn(2+) is required as a cofactor.

Its subcellular location is the cytoplasm. It carries out the reaction tRNA(Ala) + L-alanine + ATP = L-alanyl-tRNA(Ala) + AMP + diphosphate. Catalyzes the attachment of alanine to tRNA(Ala) in a two-step reaction: alanine is first activated by ATP to form Ala-AMP and then transferred to the acceptor end of tRNA(Ala). Also edits incorrectly charged Ser-tRNA(Ala) and Gly-tRNA(Ala) via its editing domain. This is Alanine--tRNA ligase from Parvibaculum lavamentivorans (strain DS-1 / DSM 13023 / NCIMB 13966).